A 149-amino-acid polypeptide reads, in one-letter code: Ribosomal RNA large subunit methyltransferase H (149 aa).

S-adenosyl-L-methionine contacts are provided by residues L71, G98, and 117–122; that span reads LSKMTL.

Belongs to the RNA methyltransferase RlmH family. Homodimer.

The protein resides in the cytoplasm. The enzyme catalyses pseudouridine(1915) in 23S rRNA + S-adenosyl-L-methionine = N(3)-methylpseudouridine(1915) in 23S rRNA + S-adenosyl-L-homocysteine + H(+). Functionally, specifically methylates the pseudouridine at position 1915 (m3Psi1915) in 23S rRNA. The chain is Ribosomal RNA large subunit methyltransferase H from Campylobacter fetus subsp. fetus (strain 82-40).